The sequence spans 545 residues: Carboxypeptidase Y homolog A (545 aa).

Residues 1–18 (MKSSLALALLVGGAIASG) form the signal peptide. Positions 19-125 (PQQQVLREPV…RLDTYDLRVK (107 aa)) are excised as a propeptide. Intrachain disulfides connect Cys179–Cys418, Cys313–Cys327, Cys337–Cys360, Cys344–Cys353, and Cys382–Cys388. The N-linked (GlcNAc...) asparagine glycan is linked to Asn210. The active site involves Ser266. Asp457 is a catalytic residue. N-linked (GlcNAc...) asparagine glycans are attached at residues Asn487 and Asn507. The active site involves His518.

It belongs to the peptidase S10 family.

It localises to the vacuole. It catalyses the reaction Release of a C-terminal amino acid with broad specificity.. Functionally, vacuolar carboxypeptidase involved in degradation of small peptides. Digests preferentially peptides containing an aliphatic or hydrophobic residue in P1' position, as well as methionine, leucine or phenylalanine in P1 position of ester substrate. The polypeptide is Carboxypeptidase Y homolog A (CPYA) (Ajellomyces capsulatus (strain NAm1 / WU24) (Darling's disease fungus)).